The sequence spans 448 residues: UPF0210 protein PAE3581 (448 aa).

It belongs to the UPF0210 family.

This is UPF0210 protein PAE3581 from Pyrobaculum aerophilum (strain ATCC 51768 / DSM 7523 / JCM 9630 / CIP 104966 / NBRC 100827 / IM2).